The sequence spans 915 residues: Bifunctional uridylyltransferase/uridylyl-removing enzyme (915 aa).

Positions 1-360 (MFNCAVTAID…PDEERPKKQP (360 aa)) are uridylyltransferase. Residues 361 to 731 (INARFNQVGE…EHRELALDAV (371 aa)) form a uridylyl-removing region. The HD domain maps to 478–594 (VDAHTLFLIR…TLFADLVGNV (117 aa)). 2 ACT domains span residues 732 to 817 (QVFV…RIPR) and 840 to 915 (IMSL…NDSI).

It belongs to the GlnD family. Mg(2+) serves as cofactor.

The enzyme catalyses [protein-PII]-L-tyrosine + UTP = [protein-PII]-uridylyl-L-tyrosine + diphosphate. The catalysed reaction is [protein-PII]-uridylyl-L-tyrosine + H2O = [protein-PII]-L-tyrosine + UMP + H(+). Its activity is regulated as follows. Uridylyltransferase (UTase) activity is inhibited by glutamine, while glutamine activates uridylyl-removing (UR) activity. In terms of biological role, modifies, by uridylylation and deuridylylation, the PII regulatory proteins (GlnB and homologs), in response to the nitrogen status of the cell that GlnD senses through the glutamine level. Under low glutamine levels, catalyzes the conversion of the PII proteins and UTP to PII-UMP and PPi, while under higher glutamine levels, GlnD hydrolyzes PII-UMP to PII and UMP (deuridylylation). Thus, controls uridylylation state and activity of the PII proteins, and plays an important role in the regulation of nitrogen assimilation and metabolism. The polypeptide is Bifunctional uridylyltransferase/uridylyl-removing enzyme (Psychrobacter arcticus (strain DSM 17307 / VKM B-2377 / 273-4)).